Consider the following 92-residue polypeptide: Small ribosomal subunit protein uS19 (92 aa).

It belongs to the universal ribosomal protein uS19 family.

Functionally, protein S19 forms a complex with S13 that binds strongly to the 16S ribosomal RNA. The chain is Small ribosomal subunit protein uS19 from Rhodopseudomonas palustris (strain BisB5).